A 212-amino-acid polypeptide reads, in one-letter code: Riboflavin synthase (212 aa).

2 Lumazine-binding repeats span residues 1–97 (MFTG…VGGH) and 98–195 (LVSG…VDSV). Residues 4-6 (GIV), 48-50 (CLT), 62-67 (DIVEET), 101-103 (GHI), Lys137, 146-148 (SLT), and 160-165 (FLIPET) each bind 2,4-dihydroxypteridine.

In terms of assembly, homotrimer.

It carries out the reaction 2 6,7-dimethyl-8-(1-D-ribityl)lumazine + H(+) = 5-amino-6-(D-ribitylamino)uracil + riboflavin. It participates in cofactor biosynthesis; riboflavin biosynthesis; riboflavin from 2-hydroxy-3-oxobutyl phosphate and 5-amino-6-(D-ribitylamino)uracil: step 2/2. Its function is as follows. Catalyzes the dismutation of two molecules of 6,7-dimethyl-8-ribityllumazine, resulting in the formation of riboflavin and 5-amino-6-(D-ribitylamino)uracil. This Buchnera aphidicola subsp. Baizongia pistaciae (strain Bp) protein is Riboflavin synthase (ribE).